A 199-amino-acid chain; its full sequence is Holliday junction branch migration complex subunit RuvA (199 aa).

The segment at 1–63 (MIGKLNGKID…EEHIHLYGFL (63 aa)) is domain I. The tract at residues 64–141 (TLEEKNFFNL…TKIFSSSAII (78 aa)) is domain II. Residues 141-145 (IKDSN) are flexible linker. The segment at 146–199 (ISSIAINEVMKALVNLGFTRFEAQNTVQGIITQNPKISIDELIKTALKNRNSSF) is domain III.

It belongs to the RuvA family. Homotetramer. Forms an RuvA(8)-RuvB(12)-Holliday junction (HJ) complex. HJ DNA is sandwiched between 2 RuvA tetramers; dsDNA enters through RuvA and exits via RuvB. An RuvB hexamer assembles on each DNA strand where it exits the tetramer. Each RuvB hexamer is contacted by two RuvA subunits (via domain III) on 2 adjacent RuvB subunits; this complex drives branch migration. In the full resolvosome a probable DNA-RuvA(4)-RuvB(12)-RuvC(2) complex forms which resolves the HJ.

The protein resides in the cytoplasm. Its function is as follows. The RuvA-RuvB-RuvC complex processes Holliday junction (HJ) DNA during genetic recombination and DNA repair, while the RuvA-RuvB complex plays an important role in the rescue of blocked DNA replication forks via replication fork reversal (RFR). RuvA specifically binds to HJ cruciform DNA, conferring on it an open structure. The RuvB hexamer acts as an ATP-dependent pump, pulling dsDNA into and through the RuvAB complex. HJ branch migration allows RuvC to scan DNA until it finds its consensus sequence, where it cleaves and resolves the cruciform DNA. The polypeptide is Holliday junction branch migration complex subunit RuvA (Rickettsia prowazekii (strain Madrid E)).